We begin with the raw amino-acid sequence, 299 residues long: UPF0603 protein OsI_019212, chloroplastic (299 aa).

Composition is skewed to low complexity over residues 1 to 14 (METL…LSPL) and 22 to 36 (ASPA…SSPA). A chloroplast-targeting transit peptide spans 1–41 (METLLSPSTLLSPLRGSKKKPASPAASASSSSSSPARSVVS). Disordered regions lie at residues 1–60 (METL…WRGD) and 244–265 (PDPG…TKEE). The transit peptide at 42–98 (CALRRQQPPPQAVAAWRGDGGRGGGVGSWATFLQHGLAAAALSLAISMAPAPAPAVA) directs the protein to the thylakoid. A compositionally biased stretch (basic and acidic residues) spans 252-265 (KDNKRESNFKTKEE). A helical membrane pass occupies residues 276 to 296 (VVGGLLVIAFVVPMAQYYAYI).

The protein belongs to the UPF0603 family.

It localises to the plastid. The protein localises to the chloroplast thylakoid membrane. In Oryza sativa subsp. indica (Rice), this protein is UPF0603 protein OsI_019212, chloroplastic.